Here is a 107-residue protein sequence, read N- to C-terminus: Putative antitoxin VapB5 (107 aa).

2 helical membrane-spanning segments follow: residues 3–23 (GPVI…ILLA) and 65–85 (LIIL…AYLY).

Its subcellular location is the cell membrane. Its function is as follows. Possibly the antitoxin component of a type II toxin-antitoxin (TA) system. Its cognate toxin is VapC5 (Potential). The sequence is that of Putative antitoxin VapB5 (vapB5) from Methanocaldococcus jannaschii (strain ATCC 43067 / DSM 2661 / JAL-1 / JCM 10045 / NBRC 100440) (Methanococcus jannaschii).